Consider the following 561-residue polypeptide: Urocanate hydratase (561 aa).

NAD(+)-binding positions include 52–53 (GG), Q130, 176–178 (GMG), E196, R201, 242–243 (NA), 263–267 (QTSAH), 273–274 (YL), and Y322. C410 is an active-site residue. G492 contacts NAD(+).

This sequence belongs to the urocanase family. NAD(+) is required as a cofactor.

The protein resides in the cytoplasm. It carries out the reaction 4-imidazolone-5-propanoate = trans-urocanate + H2O. It functions in the pathway amino-acid degradation; L-histidine degradation into L-glutamate; N-formimidoyl-L-glutamate from L-histidine: step 2/3. Functionally, catalyzes the conversion of urocanate to 4-imidazolone-5-propionate. The polypeptide is Urocanate hydratase (Salmonella arizonae (strain ATCC BAA-731 / CDC346-86 / RSK2980)).